The sequence spans 226 residues: 7-cyano-7-deazaguanine synthase (226 aa).

11-21 (LSGGLDSATCL) contacts ATP. Zn(2+) is bound by residues C191, C201, C204, and C207.

The protein belongs to the QueC family. It depends on Zn(2+) as a cofactor.

The enzyme catalyses 7-carboxy-7-deazaguanine + NH4(+) + ATP = 7-cyano-7-deazaguanine + ADP + phosphate + H2O + H(+). Its pathway is purine metabolism; 7-cyano-7-deazaguanine biosynthesis. In terms of biological role, catalyzes the ATP-dependent conversion of 7-carboxy-7-deazaguanine (CDG) to 7-cyano-7-deazaguanine (preQ(0)). This Aromatoleum aromaticum (strain DSM 19018 / LMG 30748 / EbN1) (Azoarcus sp. (strain EbN1)) protein is 7-cyano-7-deazaguanine synthase.